The primary structure comprises 322 residues: Packaging protein 3 (322 aa).

Positions 1–24 (MHPILKNIRSQPDQGRAEEHNPEL) are disordered. The interval 1–127 (MHPILKNIRS…RDVERWQHDT (127 aa)) is interaction with packaging protein 1.

The protein belongs to the adenoviridae packaging protein 3 family. Part of the genome packaging complex composed of packaging proteins 1, 2 and 3; this complex specifically binds to the packaging sequence on the left end of viral genomic DNA and performs packaging of the viral genome. Interacts with hexon-linking protein IIIa; this interaction is required to promote correct genome packaging. Post-translationally, cleaved at different sites by the viral protease during virion maturation.

It is found in the host nucleus. Functionally, involved in viral genome packaging through its interaction with packaging proteins 1 and 2. After proteolytic cleavage by adenovirus protease, L1 52/55k protein is removed from the capsid during viral maturation. The polypeptide is Packaging protein 3 (Pantherophis guttatus (Corn snake)).